The primary structure comprises 168 residues: Putative ankyrin repeat protein RBE_1411 (168 aa).

ANK repeat units lie at residues 59-88 (TIFSELSIAIDKGNLEPLKNFLKNNKLQHK), 98-127 (YGDTPLCYAAEKNNFEVAKILIKYGADLTI), and 131-160 (KGETPIELFSQYGNREAVNYLQHCLDILGN).

The polypeptide is Putative ankyrin repeat protein RBE_1411 (Rickettsia bellii (strain RML369-C)).